The sequence spans 60 residues: Large ribosomal subunit protein bL32 (60 aa).

The segment covering 1–23 has biased composition (basic residues); it reads MACPKKKTSNAKRDQRRAHWRKQ. Residues 1–60 are disordered; the sequence is MACPKKKTSNAKRDQRRAHWRKQAAREAQKALSLGKSVLSGRSNSFVYPTKEEEEGEDEE.

This sequence belongs to the bacterial ribosomal protein bL32 family.

This Microcystis aeruginosa (strain NIES-843 / IAM M-2473) protein is Large ribosomal subunit protein bL32.